A 149-amino-acid chain; its full sequence is 3-dehydroquinate dehydratase (149 aa).

Tyr26 functions as the Proton acceptor in the catalytic mechanism. Substrate is bound by residues Asn77, His83, and Asp90. The active-site Proton donor is the His103. Residues 104 to 105 and Arg114 contribute to the substrate site; that span reads LS.

The protein belongs to the type-II 3-dehydroquinase family. In terms of assembly, homododecamer.

It catalyses the reaction 3-dehydroquinate = 3-dehydroshikimate + H2O. Its pathway is metabolic intermediate biosynthesis; chorismate biosynthesis; chorismate from D-erythrose 4-phosphate and phosphoenolpyruvate: step 3/7. Functionally, catalyzes a trans-dehydration via an enolate intermediate. This is 3-dehydroquinate dehydratase from Vibrio parahaemolyticus serotype O3:K6 (strain RIMD 2210633).